The primary structure comprises 51 residues: MAKSRCCGSQSRSRCCRPRQRCRRRRRRSCRARRRAMRCCRRRYRLRCRRY.

The protein belongs to the protamine P1 family. In terms of tissue distribution, testis.

The protein localises to the nucleus. The protein resides in the chromosome. Functionally, protamines substitute for histones in the chromatin of sperm during the haploid phase of spermatogenesis. They compact sperm DNA into a highly condensed, stable and inactive complex. This is Sperm protamine P1 (PRM1) from Nasalis larvatus (Proboscis monkey).